A 127-amino-acid polypeptide reads, in one-letter code: Holotricin-2 (127 aa).

Residues 1–15 form the signal peptide; it reads MMKLVIALCLIGISA. Positions 16 to 55 are excised as a propeptide; sequence AYVVPVYYEIYPEDATFDEADIEPQLSPAELHHGSIRERR. Positions 43–84 are disordered; sequence PAELHHGSIRERRSLQPGAPSFPMPGSQLPTSVSGNVEKQGR. Positions 45–56 are enriched in basic and acidic residues; sequence ELHHGSIRERRS. Residues 70 to 84 show a composition bias toward polar residues; that stretch reads QLPTSVSGNVEKQGR.

This sequence belongs to the coleoptericin family. As to expression, hemolymph.

The protein localises to the secreted. Its function is as follows. Antibacterial activity against Gram-negative bacteria but not against Gram-positive bacteria. This is Holotricin-2 from Holotrichia diomphalia (Korean black chafer).